Consider the following 405-residue polypeptide: Secreted aspartic protease 8 (405 aa).

An N-terminal signal peptide occupies residues 1-23 (MVSIITFTKNVLVTLAFALLAQG). Residues 24–75 (LAIPEDIDKRAEKVVSLDFTVTRKPFNATAHGQHHQSQQQQQQQQQQPAQKR) constitute a propeptide, activation peptide. Positions 52 to 78 (TAHGQHHQSQQQQQQQQQQPAQKRGTV) are disordered. Low complexity predominate over residues 58-70 (HQSQQQQQQQQQQ). The 304-residue stretch at 89–392 (YAATITVGSN…DLDGNTISLA (304 aa)) folds into the Peptidase A1 domain. D107 is an active-site residue. 107-109 (DTG) lines the pepstatin A pocket. Residues C122 and C134 are joined by a disulfide bond. Pepstatin A is bound by residues 160–161 (ED) and 292–296 (DSGTT). D292 is a catalytic residue. C327 and C358 form a disulfide bridge.

The protein belongs to the peptidase A1 family. In terms of assembly, monomer.

Its subcellular location is the secreted. The catalysed reaction is Preferential cleavage at the carboxyl of hydrophobic amino acids, but fails to cleave 15-Leu-|-Tyr-16, 16-Tyr-|-Leu-17 and 24-Phe-|-Phe-25 of insulin B chain. Activates trypsinogen, and degrades keratin.. In terms of biological role, secreted aspartic peptidases (SAPs) are a group of ten acidic hydrolases considered as key virulence factors. These enzymes supply the fungus with nutrient amino acids as well as are able to degrade the selected host's proteins involved in the immune defense. Moreover, acts toward human hemoglobin though limited proteolysis to generate a variety of antimicrobial hemocidins, enabling to compete with the other microorganisms of the same physiological niche using the microbicidal peptides generated from the host protein. Functionally, plays a key role in defense against host by cleaving histatin-5 (Hst 5), a peptide from human saliva that carries out fungicidal activity. The cleavage rate decreases in an order of SAP2 &gt; SAP9 &gt; SAP3 &gt; SAP7 &gt; SAP4 &gt; SAP1 &gt; SAP8. The hydrolysis of Hst 5 by SAP8 causes production of the DSHAKRHHGY, HHSHRGY and FHEKHHSHRGY peptides. This Candida albicans (strain SC5314 / ATCC MYA-2876) (Yeast) protein is Secreted aspartic protease 8.